The sequence spans 306 residues: GTPase Era (306 aa).

In terms of domain architecture, Era-type G spans 13 to 181 (YCGFIAIVGR…EKIVRESLHE (169 aa)). Residues 21 to 28 (GRPNVGKS) form a G1 region. 21-28 (GRPNVGKS) provides a ligand contact to GTP. The interval 47-51 (QTTRH) is G2. Residues 68–71 (DTPG) form a G3 region. Residues 68-72 (DTPGL) and 130-133 (NKID) each bind GTP. Positions 130 to 133 (NKID) are G4. The interval 160–162 (ISA) is G5. The region spanning 212-289 (TGDELPYSVT…HLELWVKVKS (78 aa)) is the KH type-2 domain.

It belongs to the TRAFAC class TrmE-Era-EngA-EngB-Septin-like GTPase superfamily. Era GTPase family. Monomer.

It is found in the cytoplasm. The protein resides in the cell inner membrane. An essential GTPase that binds both GDP and GTP, with rapid nucleotide exchange. Plays a role in 16S rRNA processing and 30S ribosomal subunit biogenesis and possibly also in cell cycle regulation and energy metabolism. The protein is GTPase Era of Pasteurella multocida (strain Pm70).